The following is a 65-amino-acid chain: Beta-mammal toxin Tpa2 (65 aa).

Positions 2-64 (KEGYLVGNDG…TWSRATNRCG (63 aa)) constitute an LCN-type CS-alpha/beta domain. 4 disulfides stabilise this stretch: cysteine 12–cysteine 63, cysteine 16–cysteine 38, cysteine 24–cysteine 44, and cysteine 28–cysteine 46.

As to expression, expressed by the venom gland.

It localises to the secreted. Beta toxins bind voltage-independently at site-4 of sodium channels (Nav) and shift the voltage of activation toward more negative potentials thereby affecting sodium channel activation and promoting spontaneous and repetitive firing. This toxin is lethal to mice. The polypeptide is Beta-mammal toxin Tpa2 (Tityus pachyurus (Colombian scorpion)).